Here is a 126-residue protein sequence, read N- to C-terminus: Aspartate 1-decarboxylase (126 aa).

Serine 25 serves as the catalytic Schiff-base intermediate with substrate; via pyruvic acid. Serine 25 bears the Pyruvic acid (Ser) mark. Substrate is bound at residue threonine 57. The Proton donor role is filled by tyrosine 58. 73 to 75 (GSA) lines the substrate pocket.

The protein belongs to the PanD family. As to quaternary structure, heterooctamer of four alpha and four beta subunits. It depends on pyruvate as a cofactor. Post-translationally, is synthesized initially as an inactive proenzyme, which is activated by self-cleavage at a specific serine bond to produce a beta-subunit with a hydroxyl group at its C-terminus and an alpha-subunit with a pyruvoyl group at its N-terminus.

It is found in the cytoplasm. It carries out the reaction L-aspartate + H(+) = beta-alanine + CO2. It participates in cofactor biosynthesis; (R)-pantothenate biosynthesis; beta-alanine from L-aspartate: step 1/1. In terms of biological role, catalyzes the pyruvoyl-dependent decarboxylation of aspartate to produce beta-alanine. The chain is Aspartate 1-decarboxylase from Acidovorax ebreus (strain TPSY) (Diaphorobacter sp. (strain TPSY)).